Consider the following 556-residue polypeptide: Polypeptide N-acetylgalactosaminyltransferase 13 (556 aa).

Residues Met-1–Phe-4 lie on the Cytoplasmic side of the membrane. The helical; Signal-anchor for type II membrane protein transmembrane segment at Val-5–Tyr-27 threads the bilayer. Over Phe-28–Thr-556 the chain is Lumenal. Residues Asn-94 and Asn-116 are each glycosylated (N-linked (GlcNAc...) asparagine). 5 disulfide bridges follow: Cys-105-Cys-338, Cys-329-Cys-407, Cys-441-Cys-458, Cys-481-Cys-496, and Cys-522-Cys-539. Residues Leu-114–Arg-224 form a catalytic subdomain A region. Substrate contacts are provided by Asp-155 and Arg-185. Mn(2+) is bound by residues Asp-208 and His-210. Residues Pro-284 to Arg-346 are catalytic subdomain B. Trp-315 provides a ligand contact to substrate. Residue His-343 coordinates Mn(2+). Substrate contacts are provided by Arg-346 and Tyr-351. Residues Tyr-428–Arg-550 enclose the Ricin B-type lectin domain. Asn-551 carries N-linked (GlcNAc...) asparagine glycosylation.

It belongs to the glycosyltransferase 2 family. GalNAc-T subfamily. It depends on Mn(2+) as a cofactor. As to expression, specifically expressed in neuronal cells. Not expressed in glial cells such as astrocytes. Expressed at low level.

Its subcellular location is the golgi apparatus membrane. It carries out the reaction L-seryl-[protein] + UDP-N-acetyl-alpha-D-galactosamine = a 3-O-[N-acetyl-alpha-D-galactosaminyl]-L-seryl-[protein] + UDP + H(+). The catalysed reaction is L-threonyl-[protein] + UDP-N-acetyl-alpha-D-galactosamine = a 3-O-[N-acetyl-alpha-D-galactosaminyl]-L-threonyl-[protein] + UDP + H(+). It functions in the pathway protein modification; protein glycosylation. Functionally, catalyzes the initial reaction in O-linked oligosaccharide biosynthesis, the transfer of an N-acetyl-D-galactosamine (GalNAc) residue from UDP-GalNAc to a serine or threonine residue on the protein receptor. Generates GalNAc-O-Ser/Thr structure also known as Tn antigen, which itself is immunogenic but also serves as a precursor for the synthesis of different mucin-type O-glycan core structures. Contributes to the synthesis of O-linked glycans on mucins and proteoglycans of the central nervous system. Can glycosylate both unmodified peptides and glycopeptides that already contain an O-linked GalNAc sugar. Transfers GalNAc to Thr-/Ser-rich tandem repeats GTTPSPVPTTSTTSAP of MUC5AC. Transfers GalNAc to three consecutive serine/threonine residues on SDC3 forming a triplet-Tn epitope expressed in Purkinje cells of the developing brain. May promote neurogenesis through glycosylation and stabilization of PDPN. The sequence is that of Polypeptide N-acetylgalactosaminyltransferase 13 (Galnt13) from Mus musculus (Mouse).